Reading from the N-terminus, the 240-residue chain is MRIDVLTLFPEMFSIFNHSIIGKAIEKEILKINTVNIRDYTIDKHKKVDDYPYGGGAGMVMAAQPIVDAIKTVKKENKGKVIFLGPKGKTFNQNLAKELAKEEELIFLCGHYEGIDERAYEYIDMEISLGDFVLTGGEMACIPIVDSICRLVDGVLKSSESYEDESFYNGLLEYPQYTRPAIYEGKSVPEVLLSGHHENIKKWRKAKSLIITNKVRPDLFKKYKLTEEDKKILKDFNKKL.

S-adenosyl-L-methionine-binding positions include Gly110 and 129–134 (LGDFVL).

This sequence belongs to the RNA methyltransferase TrmD family. As to quaternary structure, homodimer.

It localises to the cytoplasm. It catalyses the reaction guanosine(37) in tRNA + S-adenosyl-L-methionine = N(1)-methylguanosine(37) in tRNA + S-adenosyl-L-homocysteine + H(+). In terms of biological role, specifically methylates guanosine-37 in various tRNAs. The chain is tRNA (guanine-N(1)-)-methyltransferase from Clostridium botulinum (strain Kyoto / Type A2).